We begin with the raw amino-acid sequence, 196 residues long: ATP-dependent Clp protease proteolytic subunit (196 aa).

The active-site Nucleophile is the serine 101. Residue histidine 126 is part of the active site.

Belongs to the peptidase S14 family. In terms of assembly, component of the chloroplastic Clp protease core complex.

The protein localises to the plastid. It is found in the chloroplast stroma. It carries out the reaction Hydrolysis of proteins to small peptides in the presence of ATP and magnesium. alpha-casein is the usual test substrate. In the absence of ATP, only oligopeptides shorter than five residues are hydrolyzed (such as succinyl-Leu-Tyr-|-NHMec, and Leu-Tyr-Leu-|-Tyr-Trp, in which cleavage of the -Tyr-|-Leu- and -Tyr-|-Trp bonds also occurs).. Functionally, cleaves peptides in various proteins in a process that requires ATP hydrolysis. Has a chymotrypsin-like activity. Plays a major role in the degradation of misfolded proteins. The polypeptide is ATP-dependent Clp protease proteolytic subunit (Spinacia oleracea (Spinach)).